The following is a 589-amino-acid chain: Deoxynucleoside triphosphate triphosphohydrolase SAMHD1 (589 aa).

The residue at position 1 (Met1) is an N-acetylmethionine. Over residues 1-10 (MQSADSQNTP) the composition is skewed to polar residues. Positions 1–41 (MQSADSQNTPKRPRRDGSPRTPPDSPLADAETSPSHDLDPD) are disordered. Phosphoserine is present on Ser18. Thr21 carries the post-translational modification Phosphothreonine. Ser33 and Ser88 each carry phosphoserine. The 56-residue stretch at 45-100 (WGPEQVWSFLRRCGFSDSELLKRCREKRMSGSLLPFPEDLGISSHGKKMKLLNCIQ) folds into the SAM domain. Residues Lys104 and Val105 each contribute to the GTP site. Residue Asn107 coordinates dGTP. Residues Asp125, Gln130, and Arg133 each coordinate GTP. DGTP is bound by residues Gln137, Leu138, Val144, and Arg152. A dATP-binding site is contributed by Gln137. Position 137 (Gln137) interacts with dCTP. Position 137 (Gln137) interacts with dTTP. Arg152 is a binding site for dATP. Arg152 provides a ligand contact to dCTP. Residue Arg152 coordinates dTTP. The region spanning 152–277 (RFEHSLGVGY…IKDASKWLYK (126 aa)) is the HD domain. The Mn(2+) site is built by His155, His194, and Asp195. Residues His198 and His203 each contribute to the dATP site. The dCTP site is built by His198 and His203. The dTTP site is built by His198 and His203. His221 is an active-site residue. Asp300 is a Mn(2+) binding site. Positions 301, 304, 308, 322, 341, 343, 347, 355, 363, 364, 365, and 366 each coordinate dGTP. DATP-binding residues include Lys301, Tyr304, and Asp308. Positions 301, 304, and 308 each coordinate dCTP. Residues Lys301, Tyr304, and Asp308 each coordinate dTTP. Arg355 lines the dATP pocket. Residue Arg355 coordinates dCTP. Gln364 contributes to the dATP binding site. Gln364 is a binding site for dCTP. Gln364 serves as a coordination point for dTTP. 2 residues coordinate GTP: Arg440 and Lys444. A Glycyl lysine isopeptide (Lys-Gly) (interchain with G-Cter in SUMO2) cross-link involves residue Lys457. Position 512 (Lys512) interacts with GTP. DGTP is bound at residue Lys512.

This sequence belongs to the SAMHD1 family. As to quaternary structure, homodimer; in absence of GTP and dNTP. Homotetramer; in GTP- and dNTP-bound form. Interacts with MRE11; leading to stimulate the exonuclease activity of MRE11. Interacts with RBBP8/CtIP. Interacts (via its C-terminus) with CD81. Zn(2+) serves as cofactor.

It is found in the nucleus. It localises to the chromosome. It carries out the reaction a 2'-deoxyribonucleoside 5'-triphosphate + H2O = a 2'-deoxyribonucleoside + triphosphate + H(+). It catalyses the reaction dATP + H2O = 2'-deoxyadenosine + triphosphate + H(+). The catalysed reaction is dCTP + H2O = 2'-deoxycytidine + triphosphate + H(+). The enzyme catalyses dGTP + H2O = 2'-deoxyguanosine + triphosphate + H(+). It carries out the reaction dTTP + H2O = thymidine + triphosphate + H(+). With respect to regulation, allosterically activated and regulated via the combined actions of GTP and dNTPs (dATP, dGTP, dTTP and dCTP): Allosteric site 1 binds GTP, while allosteric site 2 binds dNTP. Allosteric activation promotes the formation of highly active homotetramers. In terms of biological role, protein that acts both as a host restriction factor involved in defense response to virus and as a regulator of DNA end resection at stalled replication forks. Has deoxynucleoside triphosphate (dNTPase) activity, which is required to restrict infection by viruses: dNTPase activity reduces cellular dNTP levels to levels too low for retroviral reverse transcription to occur, blocking early-stage virus replication in dendritic and other myeloid cells. Likewise, suppresses LINE-1 retrotransposon activity. In addition to virus restriction, dNTPase activity acts as a regulator of DNA precursor pools by regulating dNTP pools. Functions during S phase at stalled DNA replication forks to promote the resection of gapped or reversed forks: acts by stimulating the exonuclease activity of MRE11, activating the ATR-CHK1 pathway and allowing the forks to restart replication. Its ability to promote degradation of nascent DNA at stalled replication forks is required to prevent induction of type I interferons, thereby preventing chronic inflammation. Ability to promote DNA end resection at stalled replication forks is independent of dNTPase activity. Enhances immunoglobulin hypermutation in B-lymphocytes by promoting transversion mutation. In Bos taurus (Bovine), this protein is Deoxynucleoside triphosphate triphosphohydrolase SAMHD1.